A 142-amino-acid chain; its full sequence is Large ribosomal subunit protein uL11 (142 aa).

Belongs to the universal ribosomal protein uL11 family. As to quaternary structure, part of the ribosomal stalk of the 50S ribosomal subunit. Interacts with L10 and the large rRNA to form the base of the stalk. L10 forms an elongated spine to which L12 dimers bind in a sequential fashion forming a multimeric L10(L12)X complex. One or more lysine residues are methylated.

In terms of biological role, forms part of the ribosomal stalk which helps the ribosome interact with GTP-bound translation factors. This is Large ribosomal subunit protein uL11 from Parvibaculum lavamentivorans (strain DS-1 / DSM 13023 / NCIMB 13966).